We begin with the raw amino-acid sequence, 131 residues long: Protein FAM107B (131 aa).

The residue at position 2 (Ala2) is an N-acetylalanine. The disordered stretch occupies residues 39-79; the sequence is MNQKRGLAPQNKPELQKVMEKRRRDQVIKQKEEEAQKKKSD. Position 50 is an N6-acetyllysine (Lys50). The span at 52-79 shows a compositional bias: basic and acidic residues; sequence ELQKVMEKRRRDQVIKQKEEEAQKKKSD. The stretch at 61 to 112 forms a coiled coil; it reads RRDQVIKQKEEEAQKKKSDLEIELLKRQQKLEQLELEKQKLQEEQENAPEFV.

The protein belongs to the FAM107 family. Expressed in the hippocampus and hypothalamus. Expressed in the pontine nuclei and reticulotegmental nucleus. Expressed in Purkinje cell and nuclear layers of the cerebelum. Expressed in the choroid plexus. Expressed in hippocampal granule neurons of the dente gyrus.

The chain is Protein FAM107B from Mus musculus (Mouse).